The sequence spans 230 residues: Pyridoxal phosphate homeostasis protein (230 aa).

An N6-(pyridoxal phosphate)lysine modification is found at K36.

The protein belongs to the pyridoxal phosphate-binding protein YggS/PROSC family.

In terms of biological role, perhaps involved in proline biosynthesis. Its function is as follows. Pyridoxal 5'-phosphate (PLP)-binding protein, which is involved in PLP homeostasis. This is Pyridoxal phosphate homeostasis protein from Pseudomonas aeruginosa (strain ATCC 15692 / DSM 22644 / CIP 104116 / JCM 14847 / LMG 12228 / 1C / PRS 101 / PAO1).